A 170-amino-acid polypeptide reads, in one-letter code: Transcription factor E (170 aa).

In terms of domain architecture, HTH TFE/IIEalpha-type spans 1-93; it reads MKDVYLYIVE…TWYVNDEVIS (93 aa).

This sequence belongs to the TFE family. In terms of assembly, monomer. Interaction with RNA polymerase subunits RpoF and RpoE is necessary for Tfe stimulatory transcription activity. Able to interact with Tbp and RNA polymerase in the absence of DNA promoter. Interacts both with the preinitiation and elongation complexes.

Transcription factor that plays a role in the activation of archaeal genes transcribed by RNA polymerase. Facilitates transcription initiation by enhancing TATA-box recognition by TATA-box-binding protein (Tbp), and transcription factor B (Tfb) and RNA polymerase recruitment. Not absolutely required for transcription in vitro, but particularly important in cases where Tbp or Tfb function is not optimal. It dynamically alters the nucleic acid-binding properties of RNA polymerases by stabilizing the initiation complex and destabilizing elongation complexes. Seems to translocate with the RNA polymerase following initiation and acts by binding to the non template strand of the transcription bubble in elongation complexes. The polypeptide is Transcription factor E (Pyrobaculum calidifontis (strain DSM 21063 / JCM 11548 / VA1)).